The chain runs to 469 residues: Adenosylhomocysteinase (469 aa).

Residues T58, D133, and E195 each contribute to the substrate site. Residue 196–198 (TTT) coordinates NAD(+). Substrate-binding residues include K225 and D229. Residues N230, 259–264 (GFGDVG), E282, N317, 338–340 (IGH), and N383 each bind NAD(+).

It belongs to the adenosylhomocysteinase family. NAD(+) serves as cofactor.

The protein resides in the cytoplasm. It catalyses the reaction S-adenosyl-L-homocysteine + H2O = L-homocysteine + adenosine. The protein operates within amino-acid biosynthesis; L-homocysteine biosynthesis; L-homocysteine from S-adenosyl-L-homocysteine: step 1/1. Functionally, may play a key role in the regulation of the intracellular concentration of adenosylhomocysteine. The polypeptide is Adenosylhomocysteinase (Rhodopseudomonas palustris (strain TIE-1)).